The following is a 166-amino-acid chain: uncharacterized protein (166 aa).

The protein to C.perfringens pCP13 PCP12.

This is an uncharacterized protein from Clostridium perfringens.